Consider the following 247-residue polypeptide: tRNA pseudouridine synthase A (247 aa).

The active-site Nucleophile is the aspartate 53. Tyrosine 112 lines the substrate pocket.

Belongs to the tRNA pseudouridine synthase TruA family. In terms of assembly, homodimer.

The enzyme catalyses uridine(38/39/40) in tRNA = pseudouridine(38/39/40) in tRNA. Functionally, formation of pseudouridine at positions 38, 39 and 40 in the anticodon stem and loop of transfer RNAs. This chain is tRNA pseudouridine synthase A, found in Anaplasma marginale (strain Florida).